Reading from the N-terminus, the 103-residue chain is Phosphoribosyl-ATP pyrophosphatase (103 aa).

The segment at 84 to 103 (LQSREGKLSKTSDRKEINDL) is disordered.

This sequence belongs to the PRA-PH family.

The protein localises to the cytoplasm. It carries out the reaction 1-(5-phospho-beta-D-ribosyl)-ATP + H2O = 1-(5-phospho-beta-D-ribosyl)-5'-AMP + diphosphate + H(+). The protein operates within amino-acid biosynthesis; L-histidine biosynthesis; L-histidine from 5-phospho-alpha-D-ribose 1-diphosphate: step 2/9. This chain is Phosphoribosyl-ATP pyrophosphatase (hisE), found in Listeria innocua serovar 6a (strain ATCC BAA-680 / CLIP 11262).